The sequence spans 351 residues: Anthranilate phosphoribosyltransferase (351 aa).

Residues Gly80, 83–84, Thr88, 90–93, 108–116, and Ser120 contribute to the 5-phospho-alpha-D-ribose 1-diphosphate site; these read GD, NIST, and KHGNRSITS. Gly80 serves as a coordination point for anthranilate. Ser92 contacts Mg(2+). Anthranilate is bound at residue Asn111. Arg166 provides a ligand contact to anthranilate. Residues Asp229 and Glu230 each coordinate Mg(2+).

Belongs to the anthranilate phosphoribosyltransferase family. As to quaternary structure, homodimer. It depends on Mg(2+) as a cofactor.

It catalyses the reaction N-(5-phospho-beta-D-ribosyl)anthranilate + diphosphate = 5-phospho-alpha-D-ribose 1-diphosphate + anthranilate. It functions in the pathway amino-acid biosynthesis; L-tryptophan biosynthesis; L-tryptophan from chorismate: step 2/5. In terms of biological role, catalyzes the transfer of the phosphoribosyl group of 5-phosphorylribose-1-pyrophosphate (PRPP) to anthranilate to yield N-(5'-phosphoribosyl)-anthranilate (PRA). This is Anthranilate phosphoribosyltransferase from Chlorobaculum tepidum (strain ATCC 49652 / DSM 12025 / NBRC 103806 / TLS) (Chlorobium tepidum).